A 538-amino-acid polypeptide reads, in one-letter code: Phosphoenolpyruvate carboxykinase (ATP) (538 aa).

3 residues coordinate substrate: arginine 61, tyrosine 195, and lysine 201. ATP-binding positions include lysine 201, histidine 220, and 236–244 (GLSGTGKTT). Lysine 201 and histidine 220 together coordinate Mn(2+). Aspartate 257 contributes to the Mn(2+) binding site. Residues glutamate 285, arginine 323, and threonine 449 each contribute to the ATP site. Arginine 323 provides a ligand contact to substrate.

This sequence belongs to the phosphoenolpyruvate carboxykinase (ATP) family. The cofactor is Mn(2+).

The protein localises to the cytoplasm. It carries out the reaction oxaloacetate + ATP = phosphoenolpyruvate + ADP + CO2. The protein operates within carbohydrate biosynthesis; gluconeogenesis. Involved in the gluconeogenesis. Catalyzes the conversion of oxaloacetate (OAA) to phosphoenolpyruvate (PEP) through direct phosphoryl transfer between the nucleoside triphosphate and OAA. This Bradyrhizobium diazoefficiens (strain JCM 10833 / BCRC 13528 / IAM 13628 / NBRC 14792 / USDA 110) protein is Phosphoenolpyruvate carboxykinase (ATP).